The following is a 415-amino-acid chain: Phosphoglycerate kinase (415 aa).

Substrate-binding positions include 28-30 (DLN), arginine 44, 67-70 (HQGR), arginine 124, and arginine 164. ATP is bound by residues glutamate 336 and 362 to 365 (GGHF).

It belongs to the phosphoglycerate kinase family.

The protein resides in the cytoplasm. The catalysed reaction is (2R)-3-phosphoglycerate + ATP = (2R)-3-phospho-glyceroyl phosphate + ADP. It participates in carbohydrate degradation; glycolysis; pyruvate from D-glyceraldehyde 3-phosphate: step 2/5. The sequence is that of Phosphoglycerate kinase (pgk) from Aeropyrum pernix (strain ATCC 700893 / DSM 11879 / JCM 9820 / NBRC 100138 / K1).